The following is a 148-amino-acid chain: Cuticle protein 8 (148 aa).

5 repeat units span residues 16–19 (AAPA), A22, 28–31 (AAPV), 37–40 (AAPA), and 44–47 (AAPV). The Chitin-binding type R&amp;R domain occupies 58 to 128 (YPKYEFNYGV…RTPGTHPVAV (71 aa)).

Its function is as follows. Component of the cuticle of migratory locust which contains more than 100 different structural proteins. This is Cuticle protein 8 from Locusta migratoria (Migratory locust).